The following is a 314-amino-acid chain: Endo-beta-N-acetylglucosaminidase (314 aa).

Positions 1–47 are cleaved as a signal peptide; the sequence is MQFGIVAAIADGGRTARAGGSVRPPRRPPASHTAWGLPRGRPTGQPH. The interval 14–54 is disordered; it reads RTARAGGSVRPPRRPPASHTAWGLPRGRPTGQPHATPTKSG. A GH18 domain is found at 55–309; the sequence is PTSIAYVEVN…SSMTKVLYGQ (255 aa). The active-site Proton donor is E175.

Belongs to the glycosyl hydrolase 18 family. Monomer.

The protein resides in the secreted. The catalysed reaction is an N(4)-(oligosaccharide-(1-&gt;3)-[oligosaccharide-(1-&gt;6)]-beta-D-Man-(1-&gt;4)-beta-D-GlcNAc-(1-&gt;4)-alpha-D-GlcNAc)-L-asparaginyl-[protein] + H2O = an oligosaccharide-(1-&gt;3)-[oligosaccharide-(1-&gt;6)]-beta-D-Man-(1-&gt;4)-D-GlcNAc + N(4)-(N-acetyl-beta-D-glucosaminyl)-L-asparaginyl-[protein]. In terms of biological role, cleaves asparagine-linked oligomannose and hybrid, but not complex, oligosaccharides from glycoproteins. This Flavobacterium sp. (strain SK1022) protein is Endo-beta-N-acetylglucosaminidase.